The following is an 875-amino-acid chain: MASSSATLVGSTASDLLRSSTTGFTGVPLRTLGRAGLVLKRRDLTVSVTAKLRKVKRREYPWSSNPDPNMKGGRLRHLSTFQPLKQPPKPVILEFEKPLINMEKKINDFRKVAEKTGVDLSDQILALEAKYQKALVELYTNLTPIQRVTVARHPNRPTFLDHMYNMTEKFVELHGDREGYDDPAIAAGLGSIDGKTYMFIGHQKGRDTKENIKRNFAMPTPHGYRKALRLMEYADHHGFPIVTFIDTPGAFADLKSEQLGQGEAIAHNLRSMFALKVPVISIVIGEGGSGGALAIGCANKLLMLENSVFFVAMPEACGAILWKSNKAAPKAAERLKITASALLDLEIADGIIPEPLAGAHTDPSWMSQQIKIAINEAMDELTKLSTEDLIKDRMHKFRKLGVDGIQEGIPLVPSKKVNTKKREIGVPPKRQEVPIPDSQIEAEIEKLKKAIFEGEDSSAAKKNPGSQIGSAIDKLKGLFLEGKDSSAAKKTPGSQIVAELDKLKGLYLEAKDSSAAKVPGSQIVAEIEKLKNSIFEDEDSSSAVLPEKIPGSEIAVEIAKLKKNILEGKDSSSEPSKLDLDKTIETLKREVNREFSEAVKAAGLTKTLTKLRGEISKAKAGNQPLTPLLKVEIKSFNQRLSAAPNSRKLLKKRGLLREVTKVKLLLDKNKAATRKQELKKKSDEHKEAARLEQELKKKFDEVMDTPRIKEKYEALRSEVRRVDASSGSGLDDELKKKIIEFNKEVDLELATAVKSVGLEVESVKPGHGWNKSSVPEIEELNKDVQKEIEIVANSSPNVKRLIEQLKLEVAKSGGKPDSESKSRIDALTQQIKKSLAEAVDSPSLKEKYENLTRPAGDTLTDDKLREKVGVNRNFS.

Residues 1–50 constitute a chloroplast transit peptide; the sequence is MASSSATLVGSTASDLLRSSTTGFTGVPLRTLGRAGLVLKRRDLTVSVTA. The CoA carboxyltransferase C-terminal domain maps to 128–380; it reads EAKYQKALVE…KIAINEAMDE (253 aa). The stretch at 664–705 forms a coiled coil; the sequence is LLLDKNKAATRKQELKKKSDEHKEAARLEQELKKKFDEVMDT. A disordered region spans residues 845–875; that stretch reads KEKYENLTRPAGDTLTDDKLREKVGVNRNFS. The segment covering 860-869 has biased composition (basic and acidic residues); sequence TDDKLREKVG.

This sequence belongs to the AccA family. Acetyl-CoA carboxylase is a heterohexamer composed of biotin carboxyl carrier protein, biotin carboxylase and two subunits each of ACCase subunit alpha and ACCase plastid-coded subunit beta (accD).

The protein resides in the plastid. It localises to the chloroplast inner membrane. It carries out the reaction N(6)-carboxybiotinyl-L-lysyl-[protein] + acetyl-CoA = N(6)-biotinyl-L-lysyl-[protein] + malonyl-CoA. It functions in the pathway lipid metabolism; malonyl-CoA biosynthesis; malonyl-CoA from acetyl-CoA: step 1/1. With respect to regulation, activated by reductants such as dithiothreitol (DTT), and by thioredoxin in vivo, following exposure to light. In terms of biological role, component of the acetyl coenzyme A carboxylase (ACC) complex. First, biotin carboxylase catalyzes the carboxylation of biotin on its carrier protein (BCCP) and then the CO(2) group is transferred by the carboxyltransferase to acetyl-CoA to form malonyl-CoA. The polypeptide is Acetyl-coenzyme A carboxylase carboxyl transferase subunit alpha, chloroplastic (ACCA) (Pisum sativum (Garden pea)).